We begin with the raw amino-acid sequence, 155 residues long: Protein-export protein SecB (155 aa).

The protein belongs to the SecB family. As to quaternary structure, homotetramer, a dimer of dimers. One homotetramer interacts with 1 SecA dimer.

Its subcellular location is the cytoplasm. Its function is as follows. One of the proteins required for the normal export of preproteins out of the cell cytoplasm. It is a molecular chaperone that binds to a subset of precursor proteins, maintaining them in a translocation-competent state. It also specifically binds to its receptor SecA. This is Protein-export protein SecB from Klebsiella pneumoniae subsp. pneumoniae (strain ATCC 700721 / MGH 78578).